Here is a 99-residue protein sequence, read N- to C-terminus: Malonate decarboxylase acyl carrier protein (99 aa).

S25 carries the O-(phosphoribosyl dephospho-coenzyme A)serine modification.

This sequence belongs to the MdcC family. In terms of processing, covalently binds the prosthetic group of malonate decarboxylase.

The protein resides in the cytoplasm. In terms of biological role, subunit of malonate decarboxylase, it is an acyl carrier protein to which acetyl and malonyl thioester residues are bound via a 2'-(5''-phosphoribosyl)-3'-dephospho-CoA prosthetic group and turn over during the catalytic mechanism. This chain is Malonate decarboxylase acyl carrier protein, found in Pseudomonas fluorescens (strain SBW25).